We begin with the raw amino-acid sequence, 503 residues long: Cytochrome P450 monooxygenase roqO (503 aa).

A helical transmembrane segment spans residues 11–31 (YSGTACAISLFIFGITLLFPF). The N-linked (GlcNAc...) asparagine glycan is linked to asparagine 205. Residue cysteine 444 coordinates heme.

It belongs to the cytochrome P450 family. The cofactor is heme.

It is found in the membrane. It participates in alkaloid biosynthesis. In terms of biological role, cytochrome P450 monooxygenase; part of the gene cluster that mediates the biosynthesis of the mycotoxin meleagrin. The first stage is catalyzed by the dipeptide synthase roqA which condenses histidine and tryptophan to produce histidyltryptophanyldiketopiperazine (HTD). HTD is then converted to roquefortine C through two possible pathways. In the first pathway, prenyltransferase roqD transforms HTD to the intermediate roquefortine D, which is in turn converted to roquefortine C by the cytochrome P450 monooxygenase roqR. In the second pathway, HTD is first converted to the intermediate dehydrohistidyltryptophanyldi-ketopiperazine (DHTD) by roqR which is then prenylated by roqD to form roquefortine C. Roquefortine C can be further transformed to meleagrin via three more reactions including oxydation to glandicolin A by roqM, which is further reduced to glandicoline B by roqO. Finally, glandicoline B is converted to meleagrin by the glandicoline B O-methyltransferase roqN. More studies identified further branching and additional metabolites produced by the roquefortine/meleagrin cluster, including roquefortine F, roquefortine L, roquefortine M, roquefortine N and neoxaline. The sequence is that of Cytochrome P450 monooxygenase roqO from Penicillium rubens (strain ATCC 28089 / DSM 1075 / NRRL 1951 / Wisconsin 54-1255) (Penicillium chrysogenum).